Consider the following 137-residue polypeptide: Large ribosomal subunit protein uL16 (137 aa).

It belongs to the universal ribosomal protein uL16 family. As to quaternary structure, part of the 50S ribosomal subunit.

Its function is as follows. Binds 23S rRNA and is also seen to make contacts with the A and possibly P site tRNAs. This is Large ribosomal subunit protein uL16 from Lawsonia intracellularis (strain PHE/MN1-00).